A 100-amino-acid chain; its full sequence is Putative antiporter subunit mnhF2 (100 aa).

The next 3 membrane-spanning stretches (helical) occupy residues 6–26, 38–58, and 62–82; these read TNFF…IGLF, VVAF…VSVI, and VSFL…SVSI.

Belongs to the CPA3 antiporters (TC 2.A.63) subunit F family. In terms of assembly, may form a heterooligomeric complex that consists of seven subunits: mnhA2, mnhB2, mnhC2, mnhD2, mnhE2, mnhF2 and mnhG2.

The protein resides in the cell membrane. This chain is Putative antiporter subunit mnhF2 (mnhF2), found in Staphylococcus haemolyticus (strain JCSC1435).